A 486-amino-acid polypeptide reads, in one-letter code: Vacuolar-processing enzyme beta-isozyme (486 aa).

An N-terminal signal peptide occupies residues 1 to 21; the sequence is MAKSCYFRPALLLLLVLLVHA. Residue H169 is part of the active site. The active-site Nucleophile is the C211. A disulfide bond links C244 and C258. Residue N309 is glycosylated (N-linked (GlcNAc...) asparagine). 2 disulfides stabilise this stretch: C420–C450 and C432–C467.

This sequence belongs to the peptidase C13 family. Post-translationally, auto-catalytic activation. As to expression, seed specific. Also expressed in the flowers and buds.

Its subcellular location is the vacuole. The protein resides in the protein storage vacuole. The enzyme catalyses Hydrolysis of proteins and small molecule substrates at -Asn-|-Xaa- bonds.. In terms of biological role, asparagine-specific endopeptidase involved in the processing of vacuolar seed protein precursors into the mature forms. Probably involved in post-translational proteolysis of seed storage proteins in the protein storage vacuole of developing seeds. The chain is Vacuolar-processing enzyme beta-isozyme from Arabidopsis thaliana (Mouse-ear cress).